The primary structure comprises 471 residues: Alpha-galactosidase 2 (471 aa).

Residues 1–18 form the signal peptide; that stretch reads MFAFYFLTACISLKGVFG. C42 and C74 are joined by a disulfide. Residues D72 and D73 each coordinate substrate. N105 carries an N-linked (GlcNAc...) asparagine glycan. Residues C121 and C151 are joined by a disulfide bond. K147 contacts substrate. The active-site Nucleophile is D149. N-linked (GlcNAc...) asparagine glycosylation is present at N175. Substrate is bound at residue R205. Residue D209 is the Proton donor of the active site. 2 disulfide bridges follow: C221/C237 and C223/C230. Q251 contributes to the substrate binding site. N270, N370, N403, N413, N422, N435, and N454 each carry an N-linked (GlcNAc...) asparagine glycan.

This sequence belongs to the glycosyl hydrolase 27 family. In terms of assembly, homotetramer.

It localises to the secreted. It carries out the reaction Hydrolysis of terminal, non-reducing alpha-D-galactose residues in alpha-D-galactosides, including galactose oligosaccharides, galactomannans and galactolipids.. In Saccharomyces cerevisiae (Baker's yeast), this protein is Alpha-galactosidase 2 (MEL2).